The chain runs to 400 residues: Chalcone synthase 7 (400 aa).

Residue C168 is part of the active site.

This sequence belongs to the thiolase-like superfamily. Chalcone/stilbene synthases family.

The catalysed reaction is (E)-4-coumaroyl-CoA + 3 malonyl-CoA + 3 H(+) = 2',4,4',6'-tetrahydroxychalcone + 3 CO2 + 4 CoA. Its pathway is secondary metabolite biosynthesis; flavonoid biosynthesis. Functionally, the primary product of this enzyme is 4,2',4',6'-tetrahydroxychalcone (also termed naringenin-chalcone or chalcone) which can under specific conditions spontaneously isomerize into naringenin. The polypeptide is Chalcone synthase 7 (CHS7) (Sorghum bicolor (Sorghum)).